The primary structure comprises 505 residues: Phosphoglycerate kinase A (505 aa).

The (2R)-3-phosphoglycerate site is built by V32, D33, F34, N35, R48, S70, H71, G73, R74, R224, H260, and R261. G306 and A307 together coordinate ADP. Residue G306 coordinates CDP. Residues A307 and K308 each coordinate AMP. A307 is an ATP binding site. Position 307 (A307) interacts with Mg(2+). K308 is a (2R)-3-phosphoglycerate binding site. A CDP-binding site is contributed by E311. E311 lines the Mg(2+) pocket. ADP-binding residues include K312 and G330. K312 is a binding site for AMP. K312 serves as a coordination point for ATP. G330 contributes to the CDP binding site. Residues A331 and A403 each contribute to the AMP site. A331 and A403 together coordinate ATP. Residues A403 and N427 each contribute to the ADP site. Positions 428 and 433 each coordinate CDP. Residues F433, E434, E466, and S467 each coordinate ADP. E434 lines the AMP pocket. ATP contacts are provided by E434, E466, and S467. A Mg(2+)-binding site is contributed by E466.

It belongs to the phosphoglycerate kinase family. As to quaternary structure, monomer. Mg(2+) is required as a cofactor.

It catalyses the reaction (2R)-3-phosphoglycerate + ATP = (2R)-3-phospho-glyceroyl phosphate + ADP. It participates in carbohydrate degradation; glycolysis; pyruvate from D-glyceraldehyde 3-phosphate: step 2/5. The protein is Phosphoglycerate kinase A of Trypanosoma brucei brucei.